Here is a 1550-residue protein sequence, read N- to C-terminus: Cellulose synthase 1 (1550 aa).

A catalytic region spans residues 1 to 741 (MPEVRSSTQS…KERVLKGTVK (741 aa)). 3 consecutive transmembrane segments (helical) span residues 26–46 (GAGL…TSVT), 47–67 (LPPE…FIVG), and 106–126 (GLLG…LFLS). The tract at residues 147-240 (EWPTVDIFVP…YILIFDCDHV (94 aa)) is catalytic subdomain A. Asp-189 is a catalytic residue. Substrate contacts are provided by Asp-236 and Asp-238. A catalytic subdomain B region spans residues 317-377 (TAIEQIGGFA…GQRVRWARGM (61 aa)). The active site involves Asp-333. The next 5 helical transmembrane spans lie at 398–418 (LCYL…IFLS), 423–443 (FLFF…AYAI), 468–488 (VYET…LLSP), 507–527 (FDLG…GGLA), and 547–567 (LLNS…IAVG). One can recognise a PilZ domain in the interval 572–647 (QKRNSHRIPA…PARIIRAGNG (76 aa)). Disordered stretches follow at residues 711-734 (SSPT…RKER) and 768-813 (APAH…QPLA). A cyclic di-GMP binding domain region spans residues 742–1550 (MVSLLALLTF…KQLEDERRKS (809 aa)). The segment covering 768 to 796 (APAHQPEASDLPPLPALLPATSGAAQAGA) has biased composition (low complexity). A helical transmembrane segment spans residues 1513–1533 (VLLVGLLGCILIVSVLARALA).

In the N-terminal section; belongs to the glycosyltransferase 2 family. This sequence in the C-terminal section; belongs to the AcsB/BcsB family. Mg(2+) is required as a cofactor.

It is found in the cell inner membrane. The enzyme catalyses [(1-&gt;4)-beta-D-glucosyl](n) + UDP-alpha-D-glucose = [(1-&gt;4)-beta-D-glucosyl](n+1) + UDP + H(+). Its pathway is glycan metabolism; bacterial cellulose biosynthesis. Activated by c-di-GMP. Its function is as follows. Bifunctional protein comprised of a catalytic subunit and a regulatory subunit. The catalytic subunit of cellulose synthase polymerizes uridine 5'-diphosphate glucose to cellulose in a processive way. The thick cellulosic mats generated by this enzyme probably provide a specialized protective environment to the bacterium. The regulatory subunit binds bis-(3'-5') cyclic diguanylic acid (c-di-GMP). The protein is Cellulose synthase 1 (acsAB) of Komagataeibacter xylinus (Gluconacetobacter xylinus).